The following is a 512-amino-acid chain: MEKPIRVRFAPSPTGALHIGGVRTALYNYLLARKHQGKFILRIEDTDQNRFVPGAEQYIIDTLQWLGIDPDEGIQQGGPFAPYRQSDRKDMYRKYADQLVQAGKAYYAFDTPEELEAMRERLQAAKVASPQYNAISREWMKNSLTLPQEEVTARINAGEPYVIRFKMPHKEIVRFYDQVRGWVKVETSTLDDKVLLKSDGMATYHLANVVDDYLMQISHVIRGEEWLPSAPLHILLYQAFGWEQTMPQFVHLPILLKPEGHGKLSKRDADKHGFPIFPIAWQDPATGNHIEGFREKGYLPEALINFLALLGWSPGGDQELFTKEALVEAFSLERIGKSGVKFDIQKANWFNQQYLRNKTEKELSVYLTSELDKREIAYTTEQAEQICALVKERAIFPQDFWEQGQVFFQAPTTYDAQAIQKRWTSQAHETLAGFVDILPTISPFNAASIKESLADFLKERSIKINEMMPVIRIALMGTTAGPDLMQSIEIIGQKETIRRLRTALRIIVPVGS.

The 'HIGH' region motif lies at 11–21; it reads PSPTGALHIGG. The 'KMSKS' region motif lies at 263-267; that stretch reads KLSKR. Lysine 266 contacts ATP.

The protein belongs to the class-I aminoacyl-tRNA synthetase family. Glutamate--tRNA ligase type 1 subfamily. Monomer.

It localises to the cytoplasm. The enzyme catalyses tRNA(Glu) + L-glutamate + ATP = L-glutamyl-tRNA(Glu) + AMP + diphosphate. Catalyzes the attachment of glutamate to tRNA(Glu) in a two-step reaction: glutamate is first activated by ATP to form Glu-AMP and then transferred to the acceptor end of tRNA(Glu). The polypeptide is Glutamate--tRNA ligase (Amoebophilus asiaticus (strain 5a2)).